We begin with the raw amino-acid sequence, 309 residues long: Mitochondrial import receptor subunit TOM34 (309 aa).

3 TPR repeats span residues 9–42, 51–84, and 86–118; these read VEELRAAGNESFRNGQYAEASALYGRALRVLQAQ, SVLYSNRAACHLKDGNCRDCIKDCTSALALVPFS, and KPLLRRASAYEALEKYPMAYVDYKTVLQIDDSV. Serine 160 carries the post-translational modification Phosphoserine. The disordered stretch occupies residues 161 to 189; sequence LPSENHKEMAKSKSKETTATKNRVPSAGD. Residues 164 to 178 are compositionally biased toward basic and acidic residues; it reads ENHKEMAKSKSKETT. Position 186 is a phosphoserine (serine 186). 3 TPR repeats span residues 193–226, 227–260, and 262–294; these read AKVLKEEGNELVKKGNHKKAIEKYSESLLCSNLE, SATYSNRALCYLVLKQYTEAVKDCTEALKLDGKN, and KAFYRRAQAHKALKDYKSSFADISNLLQIEPRN. Lysine 197 participates in a covalent cross-link: Glycyl lysine isopeptide (Lys-Gly) (interchain with G-Cter in SUMO2).

Belongs to the Tom34 family. In terms of assembly, interacts with HSP90A, VCP, ATP6V1D, KIAA0665, AMPK, and DMAP1 through its TPR repeat.

It localises to the cytoplasm. Its subcellular location is the mitochondrion outer membrane. Its function is as follows. Plays a role in the import of cytosolically synthesized preproteins into mitochondria. Binds the mature portion of precursor proteins. Interacts with cellular components, and possesses weak ATPase activity. May be a chaperone-like protein that helps to keep newly synthesized precursors in an unfolded import compatible state. In Pongo abelii (Sumatran orangutan), this protein is Mitochondrial import receptor subunit TOM34 (TOMM34).